The chain runs to 287 residues: Bifunctional protein FolD 1 (287 aa).

Residues Gly-170–Ser-172 and Ser-195 contribute to the NADP(+) site.

The protein belongs to the tetrahydrofolate dehydrogenase/cyclohydrolase family. As to quaternary structure, homodimer.

It carries out the reaction (6R)-5,10-methylene-5,6,7,8-tetrahydrofolate + NADP(+) = (6R)-5,10-methenyltetrahydrofolate + NADPH. The catalysed reaction is (6R)-5,10-methenyltetrahydrofolate + H2O = (6R)-10-formyltetrahydrofolate + H(+). Its pathway is one-carbon metabolism; tetrahydrofolate interconversion. Functionally, catalyzes the oxidation of 5,10-methylenetetrahydrofolate to 5,10-methenyltetrahydrofolate and then the hydrolysis of 5,10-methenyltetrahydrofolate to 10-formyltetrahydrofolate. The sequence is that of Bifunctional protein FolD 1 from Streptomyces avermitilis (strain ATCC 31267 / DSM 46492 / JCM 5070 / NBRC 14893 / NCIMB 12804 / NRRL 8165 / MA-4680).